The primary structure comprises 254 residues: tRNA (guanine-N(7)-)-methyltransferase (254 aa).

Residues Glu-82, Glu-107, Asp-134, and Asp-157 each coordinate S-adenosyl-L-methionine. Asp-157 is an active-site residue. Substrate is bound by residues Lys-161, Asp-193, and 233 to 236; that span reads TKFE.

It belongs to the class I-like SAM-binding methyltransferase superfamily. TrmB family.

The catalysed reaction is guanosine(46) in tRNA + S-adenosyl-L-methionine = N(7)-methylguanosine(46) in tRNA + S-adenosyl-L-homocysteine. It participates in tRNA modification; N(7)-methylguanine-tRNA biosynthesis. Functionally, catalyzes the formation of N(7)-methylguanine at position 46 (m7G46) in tRNA. The sequence is that of tRNA (guanine-N(7)-)-methyltransferase from Corynebacterium jeikeium (strain K411).